The primary structure comprises 302 residues: Potassium/proton antiporter CemA (302 aa).

Helical transmembrane passes span 55–75 (VFVS…ITFL), 187–207 (FVSF…IIIL), 225–247 (FLLI…ELFL), and 262–282 (FIFL…KYWI).

The protein belongs to the CemA family.

Its subcellular location is the plastid. The protein localises to the chloroplast inner membrane. The enzyme catalyses K(+)(in) + H(+)(out) = K(+)(out) + H(+)(in). Functionally, contributes to K(+)/H(+) antiport activity by supporting proton efflux to control proton extrusion and homeostasis in chloroplasts in a light-dependent manner to modulate photosynthesis. Prevents excessive induction of non-photochemical quenching (NPQ) under continuous-light conditions. Indirectly promotes efficient inorganic carbon uptake into chloroplasts. The chain is Potassium/proton antiporter CemA from Tupiella akineta (Green alga).